Consider the following 374-residue polypeptide: S-adenosylmethionine:tRNA ribosyltransferase-isomerase (374 aa).

This sequence belongs to the QueA family. Monomer.

The protein localises to the cytoplasm. The catalysed reaction is 7-aminomethyl-7-carbaguanosine(34) in tRNA + S-adenosyl-L-methionine = epoxyqueuosine(34) in tRNA + adenine + L-methionine + 2 H(+). It functions in the pathway tRNA modification; tRNA-queuosine biosynthesis. Functionally, transfers and isomerizes the ribose moiety from AdoMet to the 7-aminomethyl group of 7-deazaguanine (preQ1-tRNA) to give epoxyqueuosine (oQ-tRNA). The polypeptide is S-adenosylmethionine:tRNA ribosyltransferase-isomerase (Prochlorococcus marinus (strain MIT 9215)).